Consider the following 403-residue polypeptide: Argininosuccinate synthase (403 aa).

10–18 (AYSGGVDTS) lines the ATP pocket. Position 89 (tyrosine 89) interacts with L-citrulline. Glycine 119 lines the ATP pocket. The L-aspartate site is built by threonine 121, asparagine 125, and aspartate 126. Asparagine 125 provides a ligand contact to L-citrulline. L-citrulline-binding residues include arginine 129, serine 177, serine 186, glutamate 262, and tyrosine 274.

The protein belongs to the argininosuccinate synthase family. Type 1 subfamily. Homotetramer.

The protein localises to the cytoplasm. The enzyme catalyses L-citrulline + L-aspartate + ATP = 2-(N(omega)-L-arginino)succinate + AMP + diphosphate + H(+). Its pathway is amino-acid biosynthesis; L-arginine biosynthesis; L-arginine from L-ornithine and carbamoyl phosphate: step 2/3. The protein is Argininosuccinate synthase of Synechococcus sp. (strain JA-3-3Ab) (Cyanobacteria bacterium Yellowstone A-Prime).